A 212-amino-acid polypeptide reads, in one-letter code: Probable GTP-binding protein EngB (212 aa).

The region spanning 27–211 is the EngB-type G domain; that stretch reads GPPEIAFAGR…QAAIVLAANG (185 aa). GTP contacts are provided by residues 35-42, 62-66, 89-92, 156-159, and 190-192; these read GRSNVGKS, GRTQE, DMPG, TKTD, and TSS. Residues Ser-42 and Thr-64 each coordinate Mg(2+).

The protein belongs to the TRAFAC class TrmE-Era-EngA-EngB-Septin-like GTPase superfamily. EngB GTPase family. Mg(2+) is required as a cofactor.

Its function is as follows. Necessary for normal cell division and for the maintenance of normal septation. In Mesorhizobium japonicum (strain LMG 29417 / CECT 9101 / MAFF 303099) (Mesorhizobium loti (strain MAFF 303099)), this protein is Probable GTP-binding protein EngB.